Consider the following 357-residue polypeptide: Non-structural protein NS2 (357 aa).

Disordered stretches follow at residues 169–191 and 229–266; these read PRLQ…DEAK and DERD…HPKT. The segment covering 233 to 249 has biased composition (basic and acidic residues); the sequence is EGDRDERGDEEQVKTLS. Positions 250-260 are enriched in acidic residues; sequence DDDDQGEDASD.

This sequence belongs to the orbivirus non-structural protein NS2 family.

Its function is as follows. Single-stranded RNA-binding protein. The chain is Non-structural protein NS2 (Segment-8) from Antilocapra americana (Pronghorn).